Here is a 934-residue protein sequence, read N- to C-terminus: Protein translocase subunit SecA (934 aa).

Residues Q87, 105–109 (GEGKT), and D515 each bind ATP. Zn(2+) is bound by residues C918, C920, C929, and H930.

The protein belongs to the SecA family. Monomer and homodimer. Part of the essential Sec protein translocation apparatus which comprises SecA, SecYEG and auxiliary proteins SecDF-YajC and YidC. The cofactor is Zn(2+).

The protein localises to the cell inner membrane. The protein resides in the cytoplasm. It catalyses the reaction ATP + H2O + cellular proteinSide 1 = ADP + phosphate + cellular proteinSide 2.. In terms of biological role, part of the Sec protein translocase complex. Interacts with the SecYEG preprotein conducting channel. Has a central role in coupling the hydrolysis of ATP to the transfer of proteins into and across the cell membrane, serving both as a receptor for the preprotein-SecB complex and as an ATP-driven molecular motor driving the stepwise translocation of polypeptide chains across the membrane. The polypeptide is Protein translocase subunit SecA (Ralstonia nicotianae (strain ATCC BAA-1114 / GMI1000) (Ralstonia solanacearum)).